We begin with the raw amino-acid sequence, 446 residues long: Phosphoglucosamine mutase (446 aa).

S99 serves as the catalytic Phosphoserine intermediate. Mg(2+) contacts are provided by S99, D242, D244, and D246. Residue S99 is modified to Phosphoserine.

This sequence belongs to the phosphohexose mutase family. Mg(2+) is required as a cofactor. Activated by phosphorylation.

It carries out the reaction alpha-D-glucosamine 1-phosphate = D-glucosamine 6-phosphate. Its function is as follows. Catalyzes the conversion of glucosamine-6-phosphate to glucosamine-1-phosphate. This Campylobacter curvus (strain 525.92) protein is Phosphoglucosamine mutase.